Reading from the N-terminus, the 283-residue chain is Thymidylate synthase (283 aa).

Arginine 22 contributes to the dUMP binding site. Cysteine 160 serves as the catalytic Nucleophile. DUMP contacts are provided by residues 180–183, asparagine 191, and 221–223; these read RSCD and HIY. Aspartate 183 lines the (6R)-5,10-methylene-5,6,7,8-tetrahydrofolate pocket. Position 282 (serine 282) interacts with (6R)-5,10-methylene-5,6,7,8-tetrahydrofolate.

Belongs to the thymidylate synthase family. Bacterial-type ThyA subfamily. Homodimer.

It localises to the cytoplasm. The enzyme catalyses dUMP + (6R)-5,10-methylene-5,6,7,8-tetrahydrofolate = 7,8-dihydrofolate + dTMP. Its pathway is pyrimidine metabolism; dTTP biosynthesis. Functionally, catalyzes the reductive methylation of 2'-deoxyuridine-5'-monophosphate (dUMP) to 2'-deoxythymidine-5'-monophosphate (dTMP) while utilizing 5,10-methylenetetrahydrofolate (mTHF) as the methyl donor and reductant in the reaction, yielding dihydrofolate (DHF) as a by-product. This enzymatic reaction provides an intracellular de novo source of dTMP, an essential precursor for DNA biosynthesis. The chain is Thymidylate synthase from Shewanella sediminis (strain HAW-EB3).